A 118-amino-acid chain; its full sequence is MKRIAFVFSTAPHGSASGREGLDALLATSALTEALGVFFISDGVFQLLPGQKPDAVLARDYIATFKLFDLYDIDQCWICAASLRERGLESVNFVVDATPLEPVALRRELGNYDVILRF.

This sequence belongs to the DsrF/TusC family. As to quaternary structure, heterohexamer, formed by a dimer of trimers. The hexameric TusBCD complex contains 2 copies each of TusB, TusC and TusD. The TusBCD complex interacts with TusE.

It is found in the cytoplasm. Its function is as follows. Part of a sulfur-relay system required for 2-thiolation of 5-methylaminomethyl-2-thiouridine (mnm(5)s(2)U) at tRNA wobble positions. This is Protein TusC from Salmonella gallinarum (strain 287/91 / NCTC 13346).